The chain runs to 85 residues: UPF0335 protein BQ12070 (85 aa).

Belongs to the UPF0335 family.

The chain is UPF0335 protein BQ12070 from Bartonella quintana (strain Toulouse) (Rochalimaea quintana).